Reading from the N-terminus, the 184-residue chain is Ribosome maturation factor RimP (184 aa).

This sequence belongs to the RimP family.

The protein resides in the cytoplasm. In terms of biological role, required for maturation of 30S ribosomal subunits. The chain is Ribosome maturation factor RimP from Corynebacterium diphtheriae (strain ATCC 700971 / NCTC 13129 / Biotype gravis).